A 204-amino-acid chain; its full sequence is Thymidylate kinase (204 aa).

11 to 18 serves as a coordination point for ATP; the sequence is GLDKSGKT.

Belongs to the thymidylate kinase family.

The catalysed reaction is dTMP + ATP = dTDP + ADP. Its pathway is pyrimidine metabolism; dTTP biosynthesis. In Bos taurus (Bovine), this protein is Thymidylate kinase (TMK).